A 438-amino-acid polypeptide reads, in one-letter code: MDTDILQKQDAEVFASIANETKRQTETLELIASENFTSRAVMQACGSVMTNKYAEGYPGKRYYGGCEFVDVAENLARDRAKKLFGCEYVNVQPHSGSSANMAVLFSVLKPGDKIMGLDLSHGGHLTHGSSVNFSGQMFEAHSYGVDRETGCIDMNKVEEMAMQVRPKLIIGGASAYSQGFDFKAFRAIADKVGALLMADIAHPAGLIAAGLLPNPLQHCHFVTTTTHKTLRGPRGGMIMMGSDFENPLGITIKTKTGSRVKMMSEVMDAEVMPGIQGGPLMHIIAGKAVAFGEALQPAFKEYAAQVMKNASTMASRFMELGYTIVSGGTKNHLMLLDLRNKNVTGKEAENLLHEAGITVNKNMVPFDDKSPFVTSGIRIGTPAMTTRGMKEAESRRIAELIDQVITSASKPDISAICEAVREEIKTICHNNPIEGYSV.

(6S)-5,6,7,8-tetrahydrofolate is bound by residues Leu-119 and 123–125 (GHL). Lys-228 bears the N6-(pyridoxal phosphate)lysine mark. A (6S)-5,6,7,8-tetrahydrofolate-binding site is contributed by 370-372 (SPF).

The protein belongs to the SHMT family. As to quaternary structure, homodimer. Pyridoxal 5'-phosphate is required as a cofactor.

The protein resides in the cytoplasm. The enzyme catalyses (6R)-5,10-methylene-5,6,7,8-tetrahydrofolate + glycine + H2O = (6S)-5,6,7,8-tetrahydrofolate + L-serine. It participates in one-carbon metabolism; tetrahydrofolate interconversion. It functions in the pathway amino-acid biosynthesis; glycine biosynthesis; glycine from L-serine: step 1/1. In terms of biological role, catalyzes the reversible interconversion of serine and glycine with tetrahydrofolate (THF) serving as the one-carbon carrier. This reaction serves as the major source of one-carbon groups required for the biosynthesis of purines, thymidylate, methionine, and other important biomolecules. Also exhibits THF-independent aldolase activity toward beta-hydroxyamino acids, producing glycine and aldehydes, via a retro-aldol mechanism. In Chlorobium chlorochromatii (strain CaD3), this protein is Serine hydroxymethyltransferase.